The sequence spans 314 residues: Elongator complex protein 5 (314 aa).

It belongs to the ELP5 family. Component of the elongator complex.

It is found in the cytoplasm. It localises to the nucleus. It participates in tRNA modification; 5-methoxycarbonylmethyl-2-thiouridine-tRNA biosynthesis. In terms of biological role, component of the elongator complex, a multiprotein complex which is required for multiple tRNA modifications, including mcm5U (5-methoxycarbonylmethyl uridine), mcm5s2U (5-methoxycarbonylmethyl-2-thiouridine), and ncm5U (5-carbamoylmethyl uridine). The elongator complex catalyzes formation of carboxymethyluridine in the wobble base at position 34 in tRNAs. This chain is Elongator complex protein 5 (iki1), found in Schizosaccharomyces pombe (strain 972 / ATCC 24843) (Fission yeast).